The sequence spans 315 residues: S-methyl-5'-thioadenosine phosphorylase (315 aa).

Phosphate contacts are provided by residues Ser22, 65 to 66, and 98 to 99; these read RH and SA. Met205 is a substrate binding site. Ser206 is a phosphate binding site. Residue 229–231 participates in substrate binding; that stretch reads DYD.

Belongs to the PNP/MTAP phosphorylase family. MTAP subfamily. In terms of assembly, homotrimer.

It localises to the cytoplasm. It is found in the nucleus. It catalyses the reaction S-methyl-5'-thioadenosine + phosphate = 5-(methylsulfanyl)-alpha-D-ribose 1-phosphate + adenine. It participates in amino-acid biosynthesis; L-methionine biosynthesis via salvage pathway; S-methyl-5-thio-alpha-D-ribose 1-phosphate from S-methyl-5'-thioadenosine (phosphorylase route): step 1/1. In terms of biological role, catalyzes the reversible phosphorylation of S-methyl-5'-thioadenosine (MTA) to adenine and 5-methylthioribose-1-phosphate. Involved in the breakdown of MTA, a major by-product of polyamine biosynthesis. Responsible for the first step in the methionine salvage pathway after MTA has been generated from S-adenosylmethionine. Has broad substrate specificity with 6-aminopurine nucleosides as preferred substrates. The chain is S-methyl-5'-thioadenosine phosphorylase from Mycosarcoma maydis (Corn smut fungus).